The chain runs to 258 residues: Ribosomal RNA large subunit methyltransferase E (258 aa).

Positions 58, 60, 78, 96, and 120 each coordinate S-adenosyl-L-methionine. K160 acts as the Proton acceptor in catalysis.

Belongs to the class I-like SAM-binding methyltransferase superfamily. RNA methyltransferase RlmE family.

The protein localises to the cytoplasm. The enzyme catalyses uridine(2552) in 23S rRNA + S-adenosyl-L-methionine = 2'-O-methyluridine(2552) in 23S rRNA + S-adenosyl-L-homocysteine + H(+). Specifically methylates the uridine in position 2552 of 23S rRNA at the 2'-O position of the ribose in the fully assembled 50S ribosomal subunit. The chain is Ribosomal RNA large subunit methyltransferase E from Methanococcus maripaludis (strain C7 / ATCC BAA-1331).